The sequence spans 210 residues: Glycerol-3-phosphate acyltransferase (210 aa).

Helical transmembrane passes span 4-24 (LIVA…IVSA), 52-72 (AAIL…WLTG), 82-102 (DTSV…PVFF), 118-138 (LAIN…VAFF), and 159-179 (FLFG…LLIW).

The protein belongs to the PlsY family. Probably interacts with PlsX.

The protein localises to the cell inner membrane. It catalyses the reaction an acyl phosphate + sn-glycerol 3-phosphate = a 1-acyl-sn-glycero-3-phosphate + phosphate. The protein operates within lipid metabolism; phospholipid metabolism. Its function is as follows. Catalyzes the transfer of an acyl group from acyl-phosphate (acyl-PO(4)) to glycerol-3-phosphate (G3P) to form lysophosphatidic acid (LPA). This enzyme utilizes acyl-phosphate as fatty acyl donor, but not acyl-CoA or acyl-ACP. This Paraburkholderia phymatum (strain DSM 17167 / CIP 108236 / LMG 21445 / STM815) (Burkholderia phymatum) protein is Glycerol-3-phosphate acyltransferase.